Reading from the N-terminus, the 287-residue chain is ATP synthase gamma chain (287 aa).

This sequence belongs to the ATPase gamma chain family. F-type ATPases have 2 components, CF(1) - the catalytic core - and CF(0) - the membrane proton channel. CF(1) has five subunits: alpha(3), beta(3), gamma(1), delta(1), epsilon(1). CF(0) has three main subunits: a, b and c.

It is found in the cell inner membrane. In terms of biological role, produces ATP from ADP in the presence of a proton gradient across the membrane. The gamma chain is believed to be important in regulating ATPase activity and the flow of protons through the CF(0) complex. The protein is ATP synthase gamma chain of Pectobacterium carotovorum subsp. carotovorum (strain PC1).